A 160-amino-acid polypeptide reads, in one-letter code: Probable chemoreceptor glutamine deamidase CheD (160 aa).

Belongs to the CheD family.

It catalyses the reaction L-glutaminyl-[protein] + H2O = L-glutamyl-[protein] + NH4(+). In terms of biological role, probably deamidates glutamine residues to glutamate on methyl-accepting chemotaxis receptors (MCPs), playing an important role in chemotaxis. This is Probable chemoreceptor glutamine deamidase CheD from Desulfitobacterium hafniense (strain DSM 10664 / DCB-2).